The primary structure comprises 478 residues: Antiviral innate immune response effector IFIT1 (478 aa).

TPR repeat units follow at residues 52 to 85 (VGIHNLLAYVKHLKGQNEEALKSLKEAEDLMQKE), 95 to 128 (LVTWSNFAWVYYHMGRLAEAQAYLDKVENICKKP), 139 to 174 (PEIDCEEGWALLKCGGKNYERAKACFEKALEGDHEN), 183 to 216 (ISAYRLDGFKLATKGYRQFSLLPLRQAVSLNPDN), 218 to 249 (YLKVLLALKLQDNGQEAEGEKYLEEALANMSS), and 251 to 284 (TYVFRYAAKFYRRKGSVDKALELLKKALQETPTS). W147 serves as a coordination point for mRNA. Position 190 (G190) interacts with RNA. RNA-binding residues include K259, H289, Q290, and K336. 4 TPR repeats span residues 305–339 (ATKGQPRGQNREKIDKMIRLAIFHFESAVENKPTF), 340–373 (EVAHLDLARMYIEAGNHRKAEETFQKLLCMKPVV), 378–412 (QDIHLQYARFQEFQKKSEINAIIHYLKAIKIEQTS), and 437–470 (LESLSLLGFVYKLKGNMNEALEYYERALRLAADF).

This sequence belongs to the IFIT family. As to quaternary structure, component of an interferon-dependent multiprotein complex, at least composed of IFIT1, IFIT2 and IFIT3. Interacts (via TPR repeats 1-4) with RPL15. Interacts with STING1/MITA; could disrupt STING1 interaction with MAVS or TBK1, acting as a negative-feedback regulator of virus-triggered signaling. Interacts with EIF3E; this could be an alternative way to inhibit translation. Post-translationally, phosphorylated. In terms of processing, ISGylated.

The protein localises to the cytoplasm. Its function is as follows. Plays a key role in the innate immune response as part of an interferon-dependent multiprotein complex, recognizing and sequestering viral RNAs that lack host-specific 2'-O-methylation at their 5' cap. By distinguishing these RNAs from host mRNAs, inhibits their translation by competing with the translation initiation factor eIF4E. Could also prevent viral replication through its interaction with DNA replication origin-binding protein E1 of several viruses. Causes the translocation of E1 from the nucleus to the cytoplasm and can also inhibit its helicase activity in vitro. The polypeptide is Antiviral innate immune response effector IFIT1 (Macaca fascicularis (Crab-eating macaque)).